The primary structure comprises 522 residues: Amphoterin-induced protein 2 (522 aa).

An N-terminal signal peptide occupies residues 1-39 (MSLRVHTLPTLLGAVVRPGCRELLCLLMITVAVGPGASG). The 29-residue stretch at 40 to 68 (VCPTACICATDIVSCTNKHLSKVPGNLFR) folds into the LRRNT domain. Residues 40–398 (VCPTACICAT…RSHAHEAFNT (359 aa)) are Extracellular-facing. Cystine bridges form between Cys41/Cys47 and Cys45/Cys54. LRR repeat units lie at residues 69–90 (LMKR…WIPV), 94–115 (KLNT…SFST), 118–139 (NLKC…VFQE), 142–163 (VLEV…AFGG), 166–187 (QLQK…LYVG), and 193–214 (ELMF…HINL). N-linked (GlcNAc...) asparagine glycosylation is present at Asn104. An LRRCT domain is found at 228 to 284 (NPFVCDCSLYSLLVFWYRRHFSSVMDFKNDYTCRLWSDSRHSRQVLLLQDSFMNCSD). Disulfide bonds link Cys232–Cys260 and Cys234–Cys282. Residues Asn281, Asn288, Asn345, Asn373, Asn381, and Asn384 are each glycosylated (N-linked (GlcNAc...) asparagine). Residues 289-379 (GSFRALGFIH…RLLNETVDVT (91 aa)) form the Ig-like C2-type domain. Cysteines 310 and 363 form a disulfide. The chain crosses the membrane as a helical span at residues 399-419 (AFTTLAACVASIVLVLLYLYL). Residues 420 to 522 (TPCPCKCKTK…FSDTPFVAST (103 aa)) lie on the Cytoplasmic side of the membrane. The segment at 501–522 (RGKSDSDSVNSVFSDTPFVAST) is disordered.

This sequence belongs to the immunoglobulin superfamily. AMIGO family. As to quaternary structure, binds itself as well as AMIGO1 and AMIGO3.

Its subcellular location is the cell membrane. The protein resides in the nucleus. Required for depolarization-dependent survival of cultured cerebellar granule neurons. May mediate homophilic as well as heterophilic cell-cell interaction with AMIGO1 or AMIGO3. May contribute to signal transduction through its intracellular domain. The polypeptide is Amphoterin-induced protein 2 (Pongo abelii (Sumatran orangutan)).